Reading from the N-terminus, the 251-residue chain is Urease accessory protein UreF (251 aa).

The segment at 1 to 20 is disordered; sequence MAPAPDPAPAGSAAPDPASA. A compositionally biased stretch (low complexity) spans 9 to 20; it reads PAGSAAPDPASA.

Belongs to the UreF family. In terms of assembly, ureD, UreF and UreG form a complex that acts as a GTP-hydrolysis-dependent molecular chaperone, activating the urease apoprotein by helping to assemble the nickel containing metallocenter of UreC. The UreE protein probably delivers the nickel.

The protein resides in the cytoplasm. Functionally, required for maturation of urease via the functional incorporation of the urease nickel metallocenter. The protein is Urease accessory protein UreF of Paracidovorax citrulli (strain AAC00-1) (Acidovorax citrulli).